A 471-amino-acid polypeptide reads, in one-letter code: FAD-linked oxidoreductase sorD (471 aa).

The N-terminal stretch at 1–23 (MQAASAFATCLLASVGGNSSAVA) is a signal peptide. N-linked (GlcNAc...) asparagine glycosylation is found at N18, N29, N174, N279, and N351. The FAD-binding PCMH-type domain maps to 41–212 (LLTTPSAIVW…TDFSIRTEPV (172 aa)).

Belongs to the oxygen-dependent FAD-linked oxidoreductase family. FAD serves as cofactor.

It functions in the pathway secondary metabolite biosynthesis. Functionally, FAD-linked oxidoreductase; part of the gene cluster that mediates the biosynthesis of sorbicillinoids, a diverse group of yellow secondary metabolites that restrict growth of competing pathogenic fungi but not of bacteria. Sorbicillinoids biosynthesis requires the action of two PKSs. SorA iteratively combines three acetyl units and the growing chain is modified by the ketoacyl reductase subunit, and optional by the enoyl reductase subunit in the second cycle. The polyketide is then handed over to the PKS SorB, which adds three more acetyl units, and two methyl groups. SorB releases an aldehyde, which undergoes spontaneous cyclization resulting in the formation of sorbicillin or 2',3'-dihydrosorbicillin. The monooxygenase sorC oxidizes sorbicillin and 2',3'-dihydrosorbicillin to 2',3'-dihydrosorbicillinol and sorbicillinol, respectively. The oxidoreductase sorD further converts sorbicillinol into oxosorbicillinol. Sorbicillinol is the building block for the other sorbicillinoids such as disorbicillinol, bisvertinolon, and dihydrobisvertinolone. This chain is FAD-linked oxidoreductase sorD, found in Penicillium rubens (strain ATCC 28089 / DSM 1075 / NRRL 1951 / Wisconsin 54-1255) (Penicillium chrysogenum).